A 442-amino-acid chain; its full sequence is Chromosomal replication initiator protein DnaA (442 aa).

The interval 1-69 (METLWDGILS…AQAGEQVIGR (69 aa)) is domain I, interacts with DnaA modulators. The interval 69–103 (RPIQVDFIVSEQSEEALKPVIEREPAPAAPPANVA) is domain II. Residues 104 to 320 (SLNSKYTFSR…GALIRAVAYV (217 aa)) are domain III, AAA+ region. Residues G148, G150, K151, and T152 each coordinate ATP. The tract at residues 321–442 (SISGLPMTVE…GNRLEADARH (122 aa)) is domain IV, binds dsDNA.

Belongs to the DnaA family. As to quaternary structure, oligomerizes as a right-handed, spiral filament on DNA at oriC.

The protein resides in the cytoplasm. Functionally, plays an essential role in the initiation and regulation of chromosomal replication. ATP-DnaA binds to the origin of replication (oriC) to initiate formation of the DNA replication initiation complex once per cell cycle. Binds the DnaA box (a 9 base pair repeat at the origin) and separates the double-stranded (ds)DNA. Forms a right-handed helical filament on oriC DNA; dsDNA binds to the exterior of the filament while single-stranded (ss)DNA is stabiized in the filament's interior. The ATP-DnaA-oriC complex binds and stabilizes one strand of the AT-rich DNA unwinding element (DUE), permitting loading of DNA polymerase. After initiation quickly degrades to an ADP-DnaA complex that is not apt for DNA replication. Binds acidic phospholipids. In Gloeobacter violaceus (strain ATCC 29082 / PCC 7421), this protein is Chromosomal replication initiator protein DnaA.